The primary structure comprises 877 residues: MSSSANSSPATTKFKFTDNLWDGFDLLVKRTDNDLIQSKNILNFFKKKAELEEQHSKKLEKLSLKTMMTIDESTSINAISYNSSWKKIINSSMMESEQHTLLNTSILNKVIQPLQAMIKDMETKRKKILQEGIKLKQDMKEMVDELKKSQFKYDKAGKDLESSRMELREYREQLDHQQQQQPSDSDLNNISKIERRIQRCEQDFSNCDEEYREQIKATNDFQHLYNTEKLPKILNDFEHFVISHSHFSKSYFTNLVSVLIELPSAYQQNYEFVKKSVEMIDITNDVQEFIRKNLMKKQLAQPFQYEPYIEGKLTKKTISLTWNNKILSQFSRSSNNNTATANNTSSGNLNPYLNGGIGGTKKDEPILPTASFKVSLDELMNRQKDNHPTLEVPYVLQVLSTRIAQMKGHVTEGIFRVPGIISTIKETRLRIDKADFNLSNIDDVRTPAALLKQWLRDIPTALIPDSLYQQCIDTPTNAIAIVKTIPIINQRVLCYLINFLQIFTKFEFVAHSKMGTSNLAMVFAPCILRCTSTDANVMLNNVPNERLFVETLIKQIPPPLNTNEFLNLPISMSDAINDSEDIEELNDLDQLSNDDNNNSNTNTSNISIGSGSNSNIVVNYSNNSPNIESSTLPSQSVVTTIETLPPLNDDHNSGSGNESNSSSSNSTTTPTGSPTTASKPRGPRTQTLGWVRIKPAPKPSAEPTITLSSSIAAGTTTTTTTATGITTTTTTTAGPEKTIISPVIIKPAAATPTTTTPTTTPTTTTSPTTATIPAVSTSTIKTSSPDRTTPLTSSPPLASTKSTDELMKKLDQFTQETTPSIRIATTTTPTTITTPTTTATTTTITTDKTTPVTSSPPTASNISSEDLMKKLDQFINF.

Positions 14–285 (FKFTDNLWDG…SVEMIDITND (272 aa)) constitute an F-BAR domain. A coiled-coil region spans residues 130–214 (QEGIKLKQDM…SNCDEEYREQ (85 aa)). The Rho-GAP domain maps to 374 to 560 (VSLDELMNRQ…TLIKQIPPPL (187 aa)). Disordered regions lie at residues 589 to 612 (DQLSNDDNNNSNTNTSNISIGSGS), 644 to 704 (LPPL…AEPT), and 749 to 800 (AATP…LAST). 3 stretches are compositionally biased toward low complexity: residues 593–612 (NDDNNNSNTNTSNISIGSGS), 653–676 (SGSGNESNSSSSNSTTTPTGSPTT), and 749–779 (AATPTTTTPTTTPTTTTSPTTATIPAVSTST). A compositionally biased stretch (polar residues) spans 780 to 800 (IKTSSPDRTTPLTSSPPLAST).

It is found in the cytoplasm. Its subcellular location is the contractile vacuole. Functionally, rho GTPase-activating protein involved in the signal transduction pathway. Regulator of the contractile vacuole network as well as involved in driving vacuole emptying. This is GTPase activating protein homolog 2 (mgp2) from Dictyostelium discoideum (Social amoeba).